A 422-amino-acid chain; its full sequence is Synaptotagmin-1 (422 aa).

Residues 1-57 (MVSESHHEALAAPPVTTVATVLPHNATEPASPGEGKEDAFSKLKEKFMNELHKIPLP) lie on the Vesicular side of the membrane. An N-linked (GlcNAc...) asparagine glycan is attached at asparagine 25. A helical transmembrane segment spans residues 58–80 (PWALIAIAIVAVLLVLTCCFCIC). S-palmitoyl cysteine attachment occurs at residues cysteine 75, cysteine 76, cysteine 78, cysteine 80, and cysteine 83. Over 81–422 (KKCLFKKKNK…EVDAMLAVKK (342 aa)) the chain is Cytoplasmic. The disordered stretch occupies residues 113–142 (TMKDQALKDDDAETGLTDGEEKEEPKEEEK). Residues 122-134 (DDAETGLTDGEEK) show a composition bias toward acidic residues. At threonine 129 the chain carries Phosphothreonine. The interval 136-382 (EPKEEEKLGK…AIGKVFVGYN (247 aa)) is phospholipid binding. Residues 142-261 (KLGKLQYSLD…DFGHVTEEWR (120 aa)) form the C2 1 domain. Leucine 172, aspartate 173, and aspartate 179 together coordinate Ca(2+). Tyrosine 230 bears the Phosphotyrosine mark. Residues aspartate 231, phenylalanine 232, aspartate 233, serine 236, lysine 237, and aspartate 239 each coordinate Ca(2+). Serine 265 is modified (phosphoserine). Positions 273–406 (KLGDICFSLR…NPRRPIAQWH (134 aa)) constitute a C2 2 domain. Residues aspartate 304 and aspartate 310 each coordinate Ca(2+). Residues serine 343 and serine 345 each carry the phosphoserine modification. Ca(2+)-binding residues include aspartate 364, aspartate 366, and aspartate 372.

It belongs to the synaptotagmin family. Homotetramer. Heterodimer; heterodimerizes with SYT2 in presence of calcium. Interacts with SCAMP5. Interacts with STON2. Forms a complex with SV2B, syntaxin 1 and SNAP25. Interacts with SV2A, SV2B and SV2C. Interacts with RIMS1. Interacts with PRRT2. Interacts with DNAJC5 in a phosphorylation-dependent manner. Interacts (via N-terminus) with RAB3A. Interacts with SYT12. Interacts with calmodulin. Interacts with DNM1 (via C-terminal proline-rich domain (PRD)); this interaction facilitates vesicle fission during clathrin-mediated endocytosis (CME). Ca(2+) serves as cofactor. In terms of processing, glycosylated.

It localises to the cytoplasmic vesicle. The protein localises to the secretory vesicle membrane. The protein resides in the secretory vesicle. Its subcellular location is the synaptic vesicle membrane. It is found in the chromaffin granule membrane. It localises to the cytoplasm. Its function is as follows. Calcium sensor that participates in triggering neurotransmitter release at the synapse. May have a regulatory role in the membrane interactions during trafficking of synaptic vesicles at the active zone of the synapse. It binds acidic phospholipids with a specificity that requires the presence of both an acidic head group and a diacyl backbone. A Ca(2+)-dependent interaction between synaptotagmin and putative receptors for activated protein kinase C has also been reported. It can bind to at least three additional proteins in a Ca(2+)-independent manner; these are neurexins, syntaxin and AP2. Plays a role in dendrite formation by melanocytes. The sequence is that of Synaptotagmin-1 from Bos taurus (Bovine).